A 545-amino-acid polypeptide reads, in one-letter code: Periplasmic trehalase (545 aa).

An N-terminal signal peptide occupies residues 1–30; sequence MPDRTALPRAMLAAWVLLLLAACSQGPAPT. Residues Arg160, 167–168, Asn204, 213–215, 285–287, and Gly318 contribute to the substrate site; these read WD, RSQ, and RQE. Active-site proton donor/acceptor residues include Asp320 and Glu503. Glu518 is a binding site for substrate.

The protein belongs to the glycosyl hydrolase 37 family.

It is found in the periplasm. It carries out the reaction alpha,alpha-trehalose + H2O = alpha-D-glucose + beta-D-glucose. Functionally, provides the cells with the ability to utilize trehalose at high osmolarity by splitting it into glucose molecules that can subsequently be taken up by the phosphotransferase-mediated uptake system. In Pseudomonas aeruginosa (strain ATCC 15692 / DSM 22644 / CIP 104116 / JCM 14847 / LMG 12228 / 1C / PRS 101 / PAO1), this protein is Periplasmic trehalase.